The following is a 301-amino-acid chain: Ribosomal RNA small subunit methyltransferase H (301 aa).

S-adenosyl-L-methionine is bound by residues 35–37 (GGH), Asp-55, Phe-84, Asp-105, and Gln-112.

This sequence belongs to the methyltransferase superfamily. RsmH family.

The protein localises to the cytoplasm. It carries out the reaction cytidine(1402) in 16S rRNA + S-adenosyl-L-methionine = N(4)-methylcytidine(1402) in 16S rRNA + S-adenosyl-L-homocysteine + H(+). In terms of biological role, specifically methylates the N4 position of cytidine in position 1402 (C1402) of 16S rRNA. The protein is Ribosomal RNA small subunit methyltransferase H of Chloroflexus aggregans (strain MD-66 / DSM 9485).